Reading from the N-terminus, the 75-residue chain is Cytoplasmic envelopment protein 3 (75 aa).

Gly2 carries the N-myristoyl glycine; by host lipid modification. Residues 53–65 are compositionally biased toward acidic residues; that stretch reads EGLEYDEDSENDE. The disordered stretch occupies residues 53–75; it reads EGLEYDEDSENDELLFLPNKKPN.

Belongs to the herpesviridae cytoplasmic envelopment protein 3 family. Interacts with BGLF2; this interaction is essential for the proper localization of each protein to the assembly complex and thus for the production of infectious virus. Myristoylation and palmitoylation (probably on one or more of the nearby cysteines at the N-terminus) enable membrane-binding and Golgi apparatus-specific targeting and are essential for efficient packaging. In terms of processing, phosphorylated. Phosphorylation does not seem to be required for recycling to the host Golgi apparatus. Packaging is selective for underphosphorylated forms.

Its subcellular location is the virion tegument. The protein localises to the virion membrane. The protein resides in the host cell membrane. It localises to the host Golgi apparatus membrane. In terms of biological role, plays an important role in the cytoplasmic envelopment of tegument proteins and capsids during the assembly and egress processes. Also participates in viral entry at the fusion step probably by regulating the core fusion machinery. The protein is Cytoplasmic envelopment protein 3 of Homo sapiens (Human).